A 429-amino-acid polypeptide reads, in one-letter code: uncharacterized protein (429 aa).

The next 11 membrane-spanning stretches (helical) occupy residues 27-47 (PFFF…QSIG), 48-68 (GIMT…VSIL), 78-98 (ILLC…YWVF), 106-126 (IFIL…FLAL), 142-162 (ALII…PAII), 198-218 (LLLA…TIVI), 219-239 (AILT…CFYF), 249-269 (VLLS…YFLD), 288-308 (FIVG…FGYL), 351-371 (LILD…IYFI), and 399-419 (FFIS…LIIL).

It is found in the cell membrane. Functionally, may function as a transporter. This is an uncharacterized protein from Klebsiella pneumoniae.